The primary structure comprises 209 residues: PF03932 family protein CutC (209 aa).

Belongs to the CutC family.

The protein localises to the cytoplasm. In terms of biological role, might participate in the control of copper homeostasis; data from other bacteria suggests it is not involved. The polypeptide is PF03932 family protein CutC (Enterococcus faecalis (strain ATCC 700802 / V583)).